The chain runs to 66 residues: Photosystem II reaction center protein H (66 aa).

A helical membrane pass occupies residues 29–49; the sequence is PIMGLTMVLFLVFLLIILQIY.

The protein belongs to the PsbH family. PSII is composed of 1 copy each of membrane proteins PsbA, PsbB, PsbC, PsbD, PsbE, PsbF, PsbH, PsbI, PsbJ, PsbK, PsbL, PsbM, PsbT, PsbX, PsbY, PsbZ, Psb30/Ycf12, at least 3 peripheral proteins of the oxygen-evolving complex and a large number of cofactors. It forms dimeric complexes.

The protein resides in the plastid. It localises to the chloroplast thylakoid membrane. Functionally, one of the components of the core complex of photosystem II (PSII), required for its stability and/or assembly. PSII is a light-driven water:plastoquinone oxidoreductase that uses light energy to abstract electrons from H(2)O, generating O(2) and a proton gradient subsequently used for ATP formation. It consists of a core antenna complex that captures photons, and an electron transfer chain that converts photonic excitation into a charge separation. The protein is Photosystem II reaction center protein H of Thalassiosira pseudonana (Marine diatom).